A 107-amino-acid chain; its full sequence is Alpha-elapitoxin-Al2a (107 aa).

The signal sequence occupies residues 1-21; sequence MKTLLLTLVVVTIVCLDLGDS. 5 disulfide bridges follow: C24–C41, C34–C62, C47–C51, C66–C77, and C78–C83.

Belongs to the three-finger toxin family. Long-chain subfamily. Type II alpha-neurotoxin sub-subfamily. Expressed by the venom gland.

Its subcellular location is the secreted. In terms of biological role, binds with high affinity to muscular (alpha-1/CHRNA1) and neuronal (alpha-7/CHRNA7) nicotinic acetylcholine receptor (nAChR) and inhibits acetylcholine from binding to the receptor, thereby impairing neuromuscular and neuronal transmission. This chain is Alpha-elapitoxin-Al2a, found in Austrelaps labialis (Pygmy copperhead).